Here is a 348-residue protein sequence, read N- to C-terminus: MTAPSQVLKIRRPDDWHVHLRDGDMLKTVVPYTSEIYGRAIVMPNLASPITTVDAAIAYRQRILDAVPAGHDFTPLMTCYLTDSLDADELERGFHEGVFTAAKLYPANATTNSSHGVTSVDAIMPVLERMEKLGMPLLVHGEVTHAEVDIFDREARFIDTVMEPLRQRLTALKVVFEHITTKDAAQYVRDGNDYLAATITPQHLMFNRNDMLVGGIRPHLYCLPILKRNIHQQALRDLVASGFTRAFLGTDSAPHSRHRKETSCGCAGCFNAPSALGSYAAVFEEMNALAHFEAFCSLNGPQFYGLPVNTGWVELVRDEQQVPENIALADDSLVPFLAGETVRWSVKK.

Zn(2+)-binding residues include histidine 17 and histidine 19. Substrate contacts are provided by residues 19 to 21 and asparagine 45; that span reads HLR. Zn(2+)-binding residues include lysine 103, histidine 140, and histidine 178. Residue lysine 103 is modified to N6-carboxylysine. Histidine 140 contacts substrate. Residue leucine 223 participates in substrate binding. Aspartate 251 provides a ligand contact to Zn(2+). Aspartate 251 is an active-site residue. Residues histidine 255 and alanine 267 each contribute to the substrate site.

This sequence belongs to the metallo-dependent hydrolases superfamily. DHOase family. Class II DHOase subfamily. Homodimer. Requires Zn(2+) as cofactor.

The enzyme catalyses (S)-dihydroorotate + H2O = N-carbamoyl-L-aspartate + H(+). The protein operates within pyrimidine metabolism; UMP biosynthesis via de novo pathway; (S)-dihydroorotate from bicarbonate: step 3/3. Catalyzes the reversible cyclization of carbamoyl aspartate to dihydroorotate. The protein is Dihydroorotase of Salmonella agona (strain SL483).